A 132-amino-acid chain; its full sequence is Ribosome-binding factor A (132 aa).

The protein belongs to the RbfA family. In terms of assembly, monomer. Binds 30S ribosomal subunits, but not 50S ribosomal subunits or 70S ribosomes.

The protein localises to the cytoplasm. Functionally, one of several proteins that assist in the late maturation steps of the functional core of the 30S ribosomal subunit. Associates with free 30S ribosomal subunits (but not with 30S subunits that are part of 70S ribosomes or polysomes). Required for efficient processing of 16S rRNA. May interact with the 5'-terminal helix region of 16S rRNA. The polypeptide is Ribosome-binding factor A (Prochlorococcus marinus (strain MIT 9515)).